Here is a 323-residue protein sequence, read N- to C-terminus: 1D-myo-inositol 2-acetamido-2-deoxy-alpha-D-glucopyranoside deacetylase (323 aa).

The Zn(2+) site is built by H28, D31, and H163.

It belongs to the MshB deacetylase family. It depends on Zn(2+) as a cofactor.

It catalyses the reaction 1D-myo-inositol 2-acetamido-2-deoxy-alpha-D-glucopyranoside + H2O = 1D-myo-inositol 2-amino-2-deoxy-alpha-D-glucopyranoside + acetate. In terms of biological role, catalyzes the deacetylation of 1D-myo-inositol 2-acetamido-2-deoxy-alpha-D-glucopyranoside (GlcNAc-Ins) in the mycothiol biosynthesis pathway. The polypeptide is 1D-myo-inositol 2-acetamido-2-deoxy-alpha-D-glucopyranoside deacetylase (Streptomyces scabiei (strain 87.22)).